Consider the following 399-residue polypeptide: Cell division protein FtsZ (399 aa).

Residues 30–34 (GGGSN), 117–119 (GTG), Glu148, Lys152, and Asp196 contribute to the GTP site. Residues 349-368 (TLMSGNQNAPSGSYEQQDSS) are disordered. Residues 351-368 (MSGNQNAPSGSYEQQDSS) show a composition bias toward polar residues.

Belongs to the FtsZ family. In terms of assembly, homodimer. Polymerizes to form a dynamic ring structure in a strictly GTP-dependent manner. Interacts directly with several other division proteins.

Its subcellular location is the cytoplasm. In terms of biological role, essential cell division protein that forms a contractile ring structure (Z ring) at the future cell division site. The regulation of the ring assembly controls the timing and the location of cell division. One of the functions of the FtsZ ring is to recruit other cell division proteins to the septum to produce a new cell wall between the dividing cells. Binds GTP and shows GTPase activity. The protein is Cell division protein FtsZ of Borreliella burgdorferi (strain ATCC 35210 / DSM 4680 / CIP 102532 / B31) (Borrelia burgdorferi).